A 612-amino-acid chain; its full sequence is MACPF domain-containing protein NSL1 (612 aa).

One can recognise an MACPF domain in the interval 5-338 (NFTRLDAHSA…PPIEELHQFL (334 aa)).

Belongs to the complement C6/C7/C8/C9 (TC 1.C.39) family.

Its function is as follows. Negatively controls the salicylic acid (SA)-mediated pathway of programmed cell death in plant immunity. The sequence is that of MACPF domain-containing protein NSL1 (NSL1) from Arabidopsis thaliana (Mouse-ear cress).